The chain runs to 493 residues: Xaa-Pro dipeptidase (493 aa).

Position 2 is an N-acetylalanine (alanine 2). Serine 167 carries the post-translational modification Phosphoserine. An a dipeptide-binding site is contributed by histidine 255. Residues aspartate 276, aspartate 287, and histidine 370 each coordinate Mn(2+). A dipeptide is bound at residue aspartate 287. Residues histidine 377 and arginine 398 each coordinate a dipeptide. Positions 412 and 452 each coordinate Mn(2+).

Belongs to the peptidase M24B family. Eukaryotic-type prolidase subfamily. In terms of assembly, homodimer. Mn(2+) serves as cofactor.

The catalysed reaction is Xaa-L-Pro dipeptide + H2O = an L-alpha-amino acid + L-proline. Specifically inhibited by the pseudodipeptide CQ31. Inhibition by CQ31 indirectly activates the CARD8 inflammasome: dipeptide accumulation following PEPD inactivation weaky inhibit dipeptidyl peptidases DDP8 and DPP9, relieving DPP8- and/or DPP9-mediated inhibition of CARD8. In terms of biological role, dipeptidase that catalyzes the hydrolysis of dipeptides with a prolyl (Xaa-Pro) or hydroxyprolyl residue in the C-terminal position. The preferred dipeptide substrate is Gly-Pro, but other Xaa-Pro dipeptides, such as Ala-Pro, Met-Pro, Phe-Pro, Val-Pro and Leu-Pro, can be cleaved. Plays an important role in collagen metabolism because the high level of iminoacids in collagen. This chain is Xaa-Pro dipeptidase, found in Homo sapiens (Human).